Consider the following 250-residue polypeptide: DNA repair protein RecO (250 aa).

The protein belongs to the RecO family.

Its function is as follows. Involved in DNA repair and RecF pathway recombination. This chain is DNA repair protein RecO, found in Lactobacillus acidophilus (strain ATCC 700396 / NCK56 / N2 / NCFM).